Consider the following 118-residue polypeptide: D-dopachrome decarboxylase (118 aa).

Proline 2 carries the N-acetylproline modification. Lysine 33 is modified (N6-acetyllysine).

This sequence belongs to the MIF family. In terms of assembly, homotrimer.

Its subcellular location is the cytoplasm. The catalysed reaction is D-dopachrome + H(+) = 5,6-dihydroxyindole + CO2. Its function is as follows. Tautomerization of D-dopachrome with decarboxylation to give 5,6-dihydroxyindole (DHI). This is D-dopachrome decarboxylase (DDT) from Bos taurus (Bovine).